A 153-amino-acid chain; its full sequence is Cytochrome c-type biogenesis protein CcmE (153 aa).

Topologically, residues 1–6 (MNARRR) are cytoplasmic. The chain crosses the membrane as a helical; Signal-anchor for type II membrane protein span at residues 7–27 (LWSLLMLILAVGTAATLTIMA). The Periplasmic segment spans residues 28 to 153 (LRRNLTYLYM…LDTPIAQTTP (126 aa)). Heme-binding residues include H121 and Y125. Over residues 130–141 (LTNKMQPTPTQH) the composition is skewed to polar residues. The disordered stretch occupies residues 130–153 (LTNKMQPTPTQHTHLDTPIAQTTP).

The protein belongs to the CcmE/CycJ family.

It localises to the cell inner membrane. Heme chaperone required for the biogenesis of c-type cytochromes. Transiently binds heme delivered by CcmC and transfers the heme to apo-cytochromes in a process facilitated by CcmF and CcmH. The polypeptide is Cytochrome c-type biogenesis protein CcmE (Xylella fastidiosa (strain 9a5c)).